We begin with the raw amino-acid sequence, 423 residues long: Gamma-glutamyl phosphate reductase (423 aa).

This sequence belongs to the gamma-glutamyl phosphate reductase family.

It localises to the cytoplasm. The enzyme catalyses L-glutamate 5-semialdehyde + phosphate + NADP(+) = L-glutamyl 5-phosphate + NADPH + H(+). Its pathway is amino-acid biosynthesis; L-proline biosynthesis; L-glutamate 5-semialdehyde from L-glutamate: step 2/2. Its function is as follows. Catalyzes the NADPH-dependent reduction of L-glutamate 5-phosphate into L-glutamate 5-semialdehyde and phosphate. The product spontaneously undergoes cyclization to form 1-pyrroline-5-carboxylate. This Pseudomonas entomophila (strain L48) protein is Gamma-glutamyl phosphate reductase.